The following is a 71-amino-acid chain: Large ribosomal subunit protein uL29 (71 aa).

Belongs to the universal ribosomal protein uL29 family.

In Methanococcus maripaludis (strain C7 / ATCC BAA-1331), this protein is Large ribosomal subunit protein uL29.